We begin with the raw amino-acid sequence, 29 residues long: Cytochrome b6-f complex subunit 8 (29 aa).

Residues T3–V23 traverse the membrane as a helical segment.

It belongs to the PetN family. The 4 large subunits of the cytochrome b6-f complex are cytochrome b6, subunit IV (17 kDa polypeptide, PetD), cytochrome f and the Rieske protein, while the 4 small subunits are PetG, PetL, PetM and PetN. The complex functions as a dimer.

The protein resides in the plastid. Its subcellular location is the chloroplast thylakoid membrane. In terms of biological role, component of the cytochrome b6-f complex, which mediates electron transfer between photosystem II (PSII) and photosystem I (PSI), cyclic electron flow around PSI, and state transitions. The sequence is that of Cytochrome b6-f complex subunit 8 from Chloranthus spicatus (Chulantree).